The chain runs to 385 residues: Lipid-A-disaccharide synthase (385 aa).

Belongs to the LpxB family.

The enzyme catalyses a lipid X + a UDP-2-N,3-O-bis[(3R)-3-hydroxyacyl]-alpha-D-glucosamine = a lipid A disaccharide + UDP + H(+). The protein operates within bacterial outer membrane biogenesis; LPS lipid A biosynthesis. Condensation of UDP-2,3-diacylglucosamine and 2,3-diacylglucosamine-1-phosphate to form lipid A disaccharide, a precursor of lipid A, a phosphorylated glycolipid that anchors the lipopolysaccharide to the outer membrane of the cell. The protein is Lipid-A-disaccharide synthase of Pseudoalteromonas translucida (strain TAC 125).